Here is a 266-residue protein sequence, read N- to C-terminus: Small ribosomal subunit protein uS3 (266 aa).

One can recognise a KH type-2 domain in the interval 39–107 (VREYLKKKLK…PVHVNIEEIR (69 aa)). A disordered region spans residues 218–266 (EVAEDKRPRRNARPGDRRPRRDGEGGAPGARRGAPRRGAGKPEDGKTGE). 2 stretches are compositionally biased toward basic and acidic residues: residues 230–241 (RPGDRRPRRDGE) and 257–266 (GKPEDGKTGE).

The protein belongs to the universal ribosomal protein uS3 family. Part of the 30S ribosomal subunit. Forms a tight complex with proteins S10 and S14.

Binds the lower part of the 30S subunit head. Binds mRNA in the 70S ribosome, positioning it for translation. This is Small ribosomal subunit protein uS3 from Burkholderia multivorans (strain ATCC 17616 / 249).